A 3681-amino-acid chain; its full sequence is E3 ubiquitin-protein ligase UPL1 (3681 aa).

The segment covering 882 to 891 has biased composition (basic and acidic residues); sequence DEKKSVDRGS. The tract at residues 882 to 912 is disordered; it reads DEKKSVDRGSDNSVSASSSTAERESDEDSSN. The segment covering 892-901 has biased composition (low complexity); the sequence is DNSVSASSST. A UBA domain is found at 1269 to 1310; it reads QLDESIVGMIVEMGFSRSRAEIALRRVGTNSVEMAMDWLFTN. In terms of domain architecture, UIM spans 1316-1335; the sequence is QEDDELAQALALSLGNSSET. 10 disordered regions span residues 1332–1358, 1768–1802, 2015–2094, 2125–2151, 2253–2287, 2401–2435, 2483–2505, 2537–2606, 2975–3003, and 3228–3254; these read SSET…KEPP, MEVD…KAEI, EQLK…MRIE, ENRA…EDAD, RQTG…TASV, NTTE…QSEE, PLPL…DGAP, IAPP…APEV, SPSS…DAES, and TAGE…KTDG. Basic and acidic residues-rich tracts occupy residues 1336 to 1345, 1782 to 1802, and 2017 to 2037; these read PKLEDTEKPV, KVGE…KAEI, and LKSE…HDSH. Over residues 2038–2087 the composition is skewed to polar residues; the sequence is GNSTETEADELNQNNSSLQQVTDAAGNGQEQAQVSSQSAGERGSSQTQAM. Residues 2130–2151 show a composition bias toward acidic residues; the sequence is DDVDDDMGDEGEDDEGDDEDAD. Residues 2253-2265 show a composition bias toward basic and acidic residues; it reads RQTGRSSLDRSGS. A compositionally biased stretch (polar residues) spans 2277 to 2287; the sequence is RPSQTGNTASV. Ser2598 is subject to Phosphoserine. Residues 2982 to 3002 are compositionally biased toward basic and acidic residues; the sequence is EKLENKPVGEEASSETRKDAE. The segment covering 3237-3247 has biased composition (polar residues); the sequence is AHGSSSKTSVD. The region spanning 3340 to 3681 is the HECT domain; sequence SPQDLKGRLN…HEASEGFGFA (342 aa). Cys3648 functions as the Glycyl thioester intermediate in the catalytic mechanism.

This sequence belongs to the UPL family. TOM1/PTR1 subfamily. Widely expressed. Expressed in root, stem, cauline and rosette leaf, seedling and flower (at protein level).

It carries out the reaction S-ubiquitinyl-[E2 ubiquitin-conjugating enzyme]-L-cysteine + [acceptor protein]-L-lysine = [E2 ubiquitin-conjugating enzyme]-L-cysteine + N(6)-ubiquitinyl-[acceptor protein]-L-lysine.. Its pathway is protein modification; protein ubiquitination. Functionally, probable E3 ubiquitin-protein ligase which mediates ubiquitination and subsequent proteasomal degradation of target proteins. In Arabidopsis thaliana (Mouse-ear cress), this protein is E3 ubiquitin-protein ligase UPL1 (UPL1).